The following is a 197-amino-acid chain: Pyridoxal 5'-phosphate synthase subunit PdxT (197 aa).

53–55 (GES) contacts L-glutamine. Residue Cys85 is the Nucleophile of the active site. L-glutamine is bound by residues Arg114 and 142–143 (IR). Active-site charge relay system residues include His179 and Glu181.

The protein belongs to the glutaminase PdxT/SNO family. In the presence of PdxS, forms a dodecamer of heterodimers. Only shows activity in the heterodimer.

It catalyses the reaction aldehydo-D-ribose 5-phosphate + D-glyceraldehyde 3-phosphate + L-glutamine = pyridoxal 5'-phosphate + L-glutamate + phosphate + 3 H2O + H(+). It carries out the reaction L-glutamine + H2O = L-glutamate + NH4(+). It functions in the pathway cofactor biosynthesis; pyridoxal 5'-phosphate biosynthesis. In terms of biological role, catalyzes the hydrolysis of glutamine to glutamate and ammonia as part of the biosynthesis of pyridoxal 5'-phosphate. The resulting ammonia molecule is channeled to the active site of PdxS. The chain is Pyridoxal 5'-phosphate synthase subunit PdxT from Pyrococcus furiosus (strain ATCC 43587 / DSM 3638 / JCM 8422 / Vc1).